Consider the following 345-residue polypeptide: D(2) dopamine receptor B (345 aa).

Residues 1–10 (EWRFSRIHCD) lie on the Extracellular side of the membrane. Cysteine 9 and cysteine 84 are joined by a disulfide. The chain crosses the membrane as a helical span at residues 11 to 32 (IFVTLDVMMCTASILNLCAISI). Over 33–53 (DRYTAVAMPMLYNTRYSSKRR) the chain is Cytoplasmic. Residues 54 to 74 (VTVMISVVWVLSFAISCPLLF) form a helical membrane-spanning segment. The Extracellular segment spans residues 75-90 (GLNNTASTVCIIDNPA). The N-linked (GlcNAc...) asparagine glycan is linked to asparagine 77. The chain crosses the membrane as a helical span at residues 91–115 (FVIYSSIVSFYVPFIVTLLVYVQIY). The Cytoplasmic portion of the chain corresponds to 116–275 (IVLRKRRKRV…SQHKEKKATQ (160 aa)). Basic and acidic residues predominate over residues 166–177 (KKKVEAGNHPED). Residues 166 to 199 (KKKVEAGNHPEDMEMEMMSSTSPPEKTKHKSASP) form a disordered region. Residues 276–297 (MLAIVLGVFIICWLPFFITHIL) form a helical membrane-spanning segment. Topologically, residues 298-311 (NMHCNCNIPQALYS) are extracellular. Cysteine 301 and cysteine 303 are joined by a disulfide. Residues 312-333 (AFTWLGYVNSAVNPIIYTTFNV) form a helical membrane-spanning segment. Residues 334–345 (EFRKAFIKILHC) are Cytoplasmic-facing. Cysteine 345 is lipidated: S-palmitoyl cysteine.

Belongs to the G-protein coupled receptor 1 family. Palmitoylated. Palmitoylation is probably required for proper localization to the plasma membrane and stability of the receptor. In terms of tissue distribution, brain; pituitary.

Its subcellular location is the cell membrane. The protein resides in the golgi apparatus membrane. This is one of the five types (D1 to D5) of receptors for dopamine. The activity of this receptor is mediated by G proteins which inhibits adenylyl cyclase. In Xenopus D2R is involved in the regulation of the melanotrope cells of the intermediate pituitary during background adaptation of the animal. This chain is D(2) dopamine receptor B (drd2-b), found in Xenopus laevis (African clawed frog).